Reading from the N-terminus, the 339-residue chain is MKFLDQVDLRVSSGDGGKGVVAWRREKYVPKGGPSGGDGGDGGSVYVEADENLYTLMDLSHNTQVFAEDGEPGGRREQTGASGEDKVIRVPPGTVVKTQTGEVLGEVVEPGQRICVAEGGQGGRGNAFFKSSTNQAPRESQPGEPGEERDLTFELKLMADVGLVGFPNAGKSTLVSSVSAAEPEVADYPFTTLTPQLGMVYVSEYETFVMADIPGIIEDAHEGKGLGLQFLRHIERTSVLLFVIPITSQDLGEEYEALLHELESHEASLLDKPRVVALSKIDILAPDERALLPDVVADEFPDDVPLLPISAVADVGLDQLKYTLFDTVHSTQSADAIDA.

The Obg domain maps to 1 to 158; the sequence is MKFLDQVDLR…RDLTFELKLM (158 aa). 2 disordered regions span residues 66 to 86 and 125 to 148; these read FAEDGEPGGRREQTGASGEDK and GNAFFKSSTNQAPRESQPGEPGEE. Positions 72-86 are enriched in basic and acidic residues; the sequence is PGGRREQTGASGEDK. Residues 129-138 show a composition bias toward polar residues; that stretch reads FKSSTNQAPR. Residues 159–329 enclose the OBG-type G domain; sequence ADVGLVGFPN…LKYTLFDTVH (171 aa). GTP contacts are provided by residues 165–172, 190–194, 212–215, 279–282, and 310–312; these read GFPNAGKS, FTTLT, DIPG, SKID, and SAV. Residues Ser-172 and Thr-192 each coordinate Mg(2+).

Belongs to the TRAFAC class OBG-HflX-like GTPase superfamily. OBG GTPase family. Monomer. The cofactor is Mg(2+).

The protein localises to the cytoplasm. An essential GTPase which binds GTP, GDP and possibly (p)ppGpp with moderate affinity, with high nucleotide exchange rates and a fairly low GTP hydrolysis rate. Plays a role in control of the cell cycle, stress response, ribosome biogenesis and in those bacteria that undergo differentiation, in morphogenesis control. The sequence is that of GTPase Obg from Salinibacter ruber (strain DSM 13855 / M31).